The sequence spans 160 residues: Transcription antitermination protein NusB (160 aa).

This sequence belongs to the NusB family.

Involved in transcription antitermination. Required for transcription of ribosomal RNA (rRNA) genes. Binds specifically to the boxA antiterminator sequence of the ribosomal RNA (rrn) operons. The polypeptide is Transcription antitermination protein NusB (Rhizobium leguminosarum bv. trifolii (strain WSM2304)).